The following is a 470-amino-acid chain: Siroheme synthase (470 aa).

The segment at 1-203 is precorrin-2 dehydrogenase /sirohydrochlorin ferrochelatase; sequence MDYLPIFVEL…GQIQQAEKQL (203 aa). NAD(+) is bound by residues 22–23 and 43–44; these read EV and PE. At S128 the chain carries Phosphoserine. The interval 214–470 is uroporphyrinogen-III C-methyltransferase; sequence GELALVGAGP…ISRPAVVDFA (257 aa). P223 provides a ligand contact to S-adenosyl-L-methionine. D246 (proton acceptor) is an active-site residue. K268 serves as the catalytic Proton donor. Residues 299 to 301, I304, 329 to 330, M381, and G410 each bind S-adenosyl-L-methionine; these read GGD and TA.

This sequence in the N-terminal section; belongs to the precorrin-2 dehydrogenase / sirohydrochlorin ferrochelatase family. In the C-terminal section; belongs to the precorrin methyltransferase family.

The catalysed reaction is uroporphyrinogen III + 2 S-adenosyl-L-methionine = precorrin-2 + 2 S-adenosyl-L-homocysteine + H(+). It catalyses the reaction precorrin-2 + NAD(+) = sirohydrochlorin + NADH + 2 H(+). The enzyme catalyses siroheme + 2 H(+) = sirohydrochlorin + Fe(2+). The protein operates within cofactor biosynthesis; adenosylcobalamin biosynthesis; precorrin-2 from uroporphyrinogen III: step 1/1. It functions in the pathway cofactor biosynthesis; adenosylcobalamin biosynthesis; sirohydrochlorin from precorrin-2: step 1/1. It participates in porphyrin-containing compound metabolism; siroheme biosynthesis; precorrin-2 from uroporphyrinogen III: step 1/1. Its pathway is porphyrin-containing compound metabolism; siroheme biosynthesis; siroheme from sirohydrochlorin: step 1/1. The protein operates within porphyrin-containing compound metabolism; siroheme biosynthesis; sirohydrochlorin from precorrin-2: step 1/1. Multifunctional enzyme that catalyzes the SAM-dependent methylations of uroporphyrinogen III at position C-2 and C-7 to form precorrin-2 via precorrin-1. Then it catalyzes the NAD-dependent ring dehydrogenation of precorrin-2 to yield sirohydrochlorin. Finally, it catalyzes the ferrochelation of sirohydrochlorin to yield siroheme. The chain is Siroheme synthase from Photorhabdus laumondii subsp. laumondii (strain DSM 15139 / CIP 105565 / TT01) (Photorhabdus luminescens subsp. laumondii).